Consider the following 297-residue polypeptide: Bifunctional protein FolD (297 aa).

NADP(+) contacts are provided by residues 168–170 (GRG), Thr-195, and Val-236.

Belongs to the tetrahydrofolate dehydrogenase/cyclohydrolase family. Homodimer.

The catalysed reaction is (6R)-5,10-methylene-5,6,7,8-tetrahydrofolate + NADP(+) = (6R)-5,10-methenyltetrahydrofolate + NADPH. It carries out the reaction (6R)-5,10-methenyltetrahydrofolate + H2O = (6R)-10-formyltetrahydrofolate + H(+). The protein operates within one-carbon metabolism; tetrahydrofolate interconversion. In terms of biological role, catalyzes the oxidation of 5,10-methylenetetrahydrofolate to 5,10-methenyltetrahydrofolate and then the hydrolysis of 5,10-methenyltetrahydrofolate to 10-formyltetrahydrofolate. This Bifidobacterium animalis subsp. lactis (strain AD011) protein is Bifunctional protein FolD.